The primary structure comprises 430 residues: Target of rapamycin complex 1 subunit toc1 (430 aa).

A phosphoserine mark is found at Ser-204 and Ser-399.

The target of rapamycin complex 1 (TORC1) is composed of at least mip1, pop3/wat1, tco89, toc1 and tor2.

It is found in the cytoplasm. Functionally, component of TORC1, which regulates multiple cellular processes to control cell growth in response to environmental signals. Tor2 is essential for growth. Nutrient limitation and environmental stress signals cause inactivation of TORC1. Active TORC1 positively controls cell growth and ribosome biogenesis by regulating ribosomal protein gene expression. TORC1 negatively controls G1 cell-cycle arrest, sexual development and amino acid uptake. Represses mating, meiosis and sporulation efficiency by interfering with the functions of the transcription factor ste11 and the meiosis-promoting RNA-binding protein mei2. In Schizosaccharomyces pombe (strain 972 / ATCC 24843) (Fission yeast), this protein is Target of rapamycin complex 1 subunit toc1.